We begin with the raw amino-acid sequence, 536 residues long: Chromosomal replication initiator protein DnaA (536 aa).

The segment at 1-72 (MNDFWQHCSA…DLARDFWNAP (72 aa)) is domain I, interacts with DnaA modulators. Residues 72–199 (PIEVQFVLDP…EAADSMYERS (128 aa)) form a domain II region. The disordered stretch occupies residues 97–121 (RAPLPAANPAPVTAGPAPSGAADAN). The span at 105-121 (PAPVTAGPAPSGAADAN) shows a compositional bias: low complexity. The interval 200-416 (KLNPVLTFDN…GALRKILAYS (217 aa)) is domain III, AAA+ region. 4 residues coordinate ATP: Gly244, Gly246, Lys247, and Thr248. A domain IV, binds dsDNA region spans residues 417–536 (KFHGREITIE…LHVLEQTLKG (120 aa)).

It belongs to the DnaA family. Oligomerizes as a right-handed, spiral filament on DNA at oriC.

It is found in the cytoplasm. In terms of biological role, plays an essential role in the initiation and regulation of chromosomal replication. ATP-DnaA binds to the origin of replication (oriC) to initiate formation of the DNA replication initiation complex once per cell cycle. Binds the DnaA box (a 9 base pair repeat at the origin) and separates the double-stranded (ds)DNA. Forms a right-handed helical filament on oriC DNA; dsDNA binds to the exterior of the filament while single-stranded (ss)DNA is stabiized in the filament's interior. The ATP-DnaA-oriC complex binds and stabilizes one strand of the AT-rich DNA unwinding element (DUE), permitting loading of DNA polymerase. After initiation quickly degrades to an ADP-DnaA complex that is not apt for DNA replication. Binds acidic phospholipids. In Burkholderia thailandensis (strain ATCC 700388 / DSM 13276 / CCUG 48851 / CIP 106301 / E264), this protein is Chromosomal replication initiator protein DnaA.